Consider the following 357-residue polypeptide: MSSSSSWRRAATVMLAAGWTHSSPAGFRLLLLQRAQNQRFLPGAHVFPGGVLDAADSSPDWVRLFAPRHTPPRFGLGPEPPRQPPFPGLSHGDADPAALPDDVALRICAIREAFEEAGVLLLRPRDAAPASQEPSQALSPPAGLAEWRSRVRSDPRCFLQLCAHLDCTPDIWALHDWGGWLTPYGRTIRRFDTTFFLCCLRDIPRVEPDVAEVVGYQWLSPSEATECFLSKEIWLAPPQFYEMRRLENFASLSALYRFCSDRPSEVPEKWLPIILLTSDGTIHLLPGDELYVKDSDFLEKNMSTDKKTEEIVKEGKVLNRVVIHSPYVYEIYMTLPSENKHVYPRNYIVNKRCTAHL.

Positions 10–242 (AATVMLAAGW…IWLAPPQFYE (233 aa)) constitute a Nudix hydrolase domain. The interval 72-93 (PRFGLGPEPPRQPPFPGLSHGD) is disordered. Pro residues predominate over residues 78-87 (PEPPRQPPFP). Positions 97–118 (AALPDDVALRICAIREAFEEAG) match the Nudix box motif. Residues E112 and E116 each coordinate Mg(2+). K300 carries the N6-succinyllysine modification. The Microbody targeting signal motif lies at 355-357 (AHL).

This sequence belongs to the Nudix hydrolase family. Monomer. Mg(2+) is required as a cofactor. It depends on Mn(2+) as a cofactor. In terms of tissue distribution, highly expressed in the kidneys, with lower levels in skeletal muscle and brain (at protein level).

It localises to the peroxisome. The catalysed reaction is an acyl-CoA + H2O = an acyl-4'-phosphopantetheine + adenosine 3',5'-bisphosphate + 2 H(+). The enzyme catalyses CoA + H2O = (R)-4'-phosphopantetheine + adenosine 3',5'-bisphosphate + 2 H(+). It carries out the reaction hexanoyl-CoA + H2O = hexanoyl-4'-phosphopantetheine + adenosine 3',5'-bisphosphate + 2 H(+). It catalyses the reaction octanoyl-CoA + H2O = S-octanoyl-4'-phosphopantetheine + adenosine 3',5'-bisphosphate + 2 H(+). The catalysed reaction is butanoyl-CoA + H2O = S-butanoyl-4'-phosphopantetheine + adenosine 3',5'-bisphosphate + 2 H(+). The enzyme catalyses propanoyl-CoA + H2O = propanoyl-4'-phosphopantetheine + adenosine 3',5'-bisphosphate + 2 H(+). It carries out the reaction malonyl-CoA + H2O = malonyl-4'-phosphopantetheine + adenosine 3',5'-bisphosphate + 2 H(+). It catalyses the reaction succinyl-CoA + H2O = succinyl-4'-phosphopantetheine + adenosine 3',5'-bisphosphate + 2 H(+). The catalysed reaction is choloyl-CoA + H2O = S-choloyl-4'-phosphopantetheine + adenosine 3',5'-bisphosphate + 2 H(+). The enzyme catalyses 4,8-dimethylnonanoyl-CoA + H2O = S-(4,8-dimethylnonanoyl)-4'-phosphopantetheine + adenosine 3',5'-bisphosphate + 2 H(+). It carries out the reaction (9Z,12Z,15Z)-octadecatrienoyl-CoA + H2O = S-(9Z,12Z,15Z-octadecatrienoyl)-4'-phosphopantetheine + adenosine 3',5'-bisphosphate + 2 H(+). It catalyses the reaction (9Z,12Z)-octadecadienoyl-CoA + H2O = S-(9Z,12Z-octadecadienoyl)-4'-phosphopantetheine + adenosine 3',5'-bisphosphate + 2 H(+). The catalysed reaction is (9Z)-hexadecenoyl-CoA + H2O = S-(9Z-hexadecenoyl)-4'-phosphopantetheine + adenosine 3',5'-bisphosphate + 2 H(+). The enzyme catalyses (9Z)-tetradecenoyl-CoA + H2O = S-(9Z-tetradecenoyl)-4'-phosphopantetheine + adenosine 3',5'-bisphosphate + 2 H(+). It carries out the reaction (6Z)-octenoyl-CoA + H2O = S-(6Z-octenoyl)-4'-phosphopantetheine + adenosine 3',5'-bisphosphate + 2 H(+). It catalyses the reaction hexadecanoyl-CoA + H2O = S-hexadecanoyl-4'-phosphopantetheine + adenosine 3',5'-bisphosphate + 2 H(+). The catalysed reaction is tetradecanoyl-CoA + H2O = tetradecanoyl-4'-phosphopantetheine + adenosine 3',5'-bisphosphate + 2 H(+). The enzyme catalyses dodecanoyl-CoA + H2O = S-dodecanoyl-4'-phosphopantetheine + adenosine 3',5'-bisphosphate + 2 H(+). It carries out the reaction a 5'-end CoA-ribonucleoside in mRNA + H2O = a 5'-end phospho-adenosine-phospho-ribonucleoside in mRNA + (R)-4'-phosphopantetheine + 2 H(+). With respect to regulation, inhibited by chenodeoxycholic acid (CDCA) and its conjugated derivatives, taurochenodeoxycholic acid and glycochenodeoxycholic acid. Inhibited by fluoride. Its function is as follows. Fatty acyl-coenzyme A (CoA) diphosphatase that hydrolyzes fatty acyl-CoA to yield acyl-4'-phosphopantetheine and adenosine 3',5'-bisphosphate. Mediates the hydrolysis of a wide range of CoA esters, including choloyl-CoA and branched-chain fatty-acyl-CoA esters and at low substrate concentrations medium and long-chain fatty-acyl-CoA esters are the primary substrates. Highest activity seen with medium-chain acyl-CoA esters and higher rates of activity seen with the unsaturated acyl-CoA esters compared with the saturated esters. Exhibits decapping activity towards dpCoA-capped RNAs in vitro. The protein is Acyl-coenzyme A diphosphatase NUDT19 (Nudt19) of Mus musculus (Mouse).